We begin with the raw amino-acid sequence, 357 residues long: Non-structural protein NS2 (357 aa).

Disordered regions lie at residues 162–199 (QNERESAPRLQVQSVSPREESRWMDDDEAKVDEEAKEM) and 228–268 (LDEK…KTHI). 2 stretches are compositionally biased toward acidic residues: residues 230-243 (EKDEEDRDEREDEE) and 250-260 (DDDEQGEDASD).

This sequence belongs to the orbivirus non-structural protein NS2 family.

Its function is as follows. Single-stranded RNA-binding protein. The chain is Non-structural protein NS2 (Segment-8) from Antilocapra americana (Pronghorn).